A 155-amino-acid chain; its full sequence is Cyanate hydratase (155 aa).

Residues Arg92, Glu95, and Ser118 contribute to the active site.

Belongs to the cyanase family.

The catalysed reaction is cyanate + hydrogencarbonate + 3 H(+) = NH4(+) + 2 CO2. Catalyzes the reaction of cyanate with bicarbonate to produce ammonia and carbon dioxide. This Mycobacterium avium (strain 104) protein is Cyanate hydratase.